We begin with the raw amino-acid sequence, 777 residues long: Semaphorin-3D (777 aa).

The N-terminal stretch at 1–37 (MNVTKDENPRSRSQDLHLFHAWMMLIMTVLFLPVTET) is a signal peptide. The region spanning 44 to 531 (RLKLTYKDLL…SWDGLVQLSL (488 aa)) is the Sema domain. A disulfide bridge links Cys117 with Cys128. Asn139 carries N-linked (GlcNAc...) asparagine glycosylation. Disulfide bonds link Cys146/Cys155, Cys286/Cys398, Cys310/Cys358, and Cys534/Cys552. The 53-residue stretch at 533–585 (RCDTYGKACADCCLARDPYCAWDGNACSRYAPTSKRRARRQDVKYGDPITQCW) folds into the PSI domain. Residues 592–680 (SHETADEKVI…TFIHTIVKLT (89 aa)) form the Ig-like C2-type domain. Residues Asn607 and Asn724 are each glycosylated (N-linked (GlcNAc...) asparagine). Residues Cys665 and Cys731 are joined by a disulfide bond. Residues 740–765 (RRQRNKGSPKWKHMQEMKKKRNRRHH) show a composition bias toward basic residues. The segment at 740 to 777 (RRQRNKGSPKWKHMQEMKKKRNRRHHRDLDELQRSVAT) is disordered. Residues 766 to 777 (RDLDELQRSVAT) show a composition bias toward basic and acidic residues.

The protein belongs to the semaphorin family.

The protein resides in the secreted. Its function is as follows. Induces the collapse and paralysis of neuronal growth cones. Could potentially act as repulsive cues toward specific neuronal populations. Binds to neuropilin. This is Semaphorin-3D (Sema3d) from Mus musculus (Mouse).